Consider the following 132-residue polypeptide: Large-conductance mechanosensitive channel (132 aa).

2 consecutive transmembrane segments (helical) span residues 14–34 (VIDLAVGVVIGAAFGKIVSSL) and 67–87 (GNFIQTIFDFLIIAAAIFMFV).

Belongs to the MscL family. Homopentamer.

The protein resides in the cell membrane. In terms of biological role, channel that opens in response to stretch forces in the membrane lipid bilayer. May participate in the regulation of osmotic pressure changes within the cell. The chain is Large-conductance mechanosensitive channel from Bacillus cereus (strain AH820).